The chain runs to 759 residues: Phosphoribosylformylglycinamidine synthase subunit PurL (759 aa).

Residue His-48 is part of the active site. Positions 51 and 91 each coordinate ATP. Residue Glu-93 participates in Mg(2+) binding. Residues 94 to 97 (SHNH) and Arg-116 contribute to the substrate site. His-95 (proton acceptor) is an active-site residue. Residue Asp-117 coordinates Mg(2+). Residue Gln-240 coordinates substrate. Asp-268 lines the Mg(2+) pocket. 317-319 (ESQ) lines the substrate pocket. Residues Asn-501 and Gly-538 each contribute to the ATP site. Position 539 (Asn-539) interacts with Mg(2+). Ser-541 is a substrate binding site.

The protein belongs to the FGAMS family. As to quaternary structure, monomer. Part of the FGAM synthase complex composed of 1 PurL, 1 PurQ and 2 PurS subunits.

The protein localises to the cytoplasm. The catalysed reaction is N(2)-formyl-N(1)-(5-phospho-beta-D-ribosyl)glycinamide + L-glutamine + ATP + H2O = 2-formamido-N(1)-(5-O-phospho-beta-D-ribosyl)acetamidine + L-glutamate + ADP + phosphate + H(+). Its pathway is purine metabolism; IMP biosynthesis via de novo pathway; 5-amino-1-(5-phospho-D-ribosyl)imidazole from N(2)-formyl-N(1)-(5-phospho-D-ribosyl)glycinamide: step 1/2. In terms of biological role, part of the phosphoribosylformylglycinamidine synthase complex involved in the purines biosynthetic pathway. Catalyzes the ATP-dependent conversion of formylglycinamide ribonucleotide (FGAR) and glutamine to yield formylglycinamidine ribonucleotide (FGAM) and glutamate. The FGAM synthase complex is composed of three subunits. PurQ produces an ammonia molecule by converting glutamine to glutamate. PurL transfers the ammonia molecule to FGAR to form FGAM in an ATP-dependent manner. PurS interacts with PurQ and PurL and is thought to assist in the transfer of the ammonia molecule from PurQ to PurL. This Chlorobaculum tepidum (strain ATCC 49652 / DSM 12025 / NBRC 103806 / TLS) (Chlorobium tepidum) protein is Phosphoribosylformylglycinamidine synthase subunit PurL.